The sequence spans 451 residues: MRECISIHIGQAGIQVGNACWELYCLEHGIQPDGQMPSDKTVGGGDDAFYTFFSETGAGKHVPRAIFVDLEPTVIDEVRTGTYRQLFHPEQLISGKEDAANNFARGHYTIGKEIVDLCLDRIRKLADNCTGLQGFLVFSAVGGGTGSGLGSLLLERLSVDYGKKSKLGFTVYPSPQVSTSVVEPYNSVLSTHSLLEHTDVSVLLDNEAIYDICRRSLDIERPTYTNLNRLVSQVISSLTASLRFDGALNVDVTEFRTNLVPYPRIHFMLSSYAPVISAEKAYHEQLSVAEITNSAFEPSSMMAKCDPRHGKYMACCLMYRGDVVPKDVNAAVATIKTKRTIQFADWCPTGFKCGINYQPPTVVPGGDLAKVQRAVCMISNSTSVAEVFSRIDHKFDLMYAKRAFVHWYVGEGMEEGEFSEAREDLAALEKDYEEVGADSAEGDEEDEGDEY.

Glutamine 11 lines the GTP pocket. The residue at position 40 (lysine 40) is an N6-acetyllysine. 6 residues coordinate GTP: glutamate 71, glycine 144, threonine 145, threonine 179, asparagine 206, and asparagine 228. Glutamate 71 is a Mg(2+) binding site. Glutamate 254 is an active-site residue. Residues 432-451 (YEEVGADSAEGDEEDEGDEY) form a disordered region.

This sequence belongs to the tubulin family. In terms of assembly, dimer of alpha and beta chains. A typical microtubule is a hollow water-filled tube with an outer diameter of 25 nm and an inner diameter of 15 nM. Alpha-beta heterodimers associate head-to-tail to form protofilaments running lengthwise along the microtubule wall with the beta-tubulin subunit facing the microtubule plus end conferring a structural polarity. Microtubules usually have 13 protofilaments but different protofilament numbers can be found in some organisms and specialized cells. Mg(2+) is required as a cofactor. Post-translationally, undergoes a tyrosination/detyrosination cycle, the cyclic removal and re-addition of a C-terminal tyrosine residue by the enzymes tubulin tyrosine carboxypeptidase (TTCP) and tubulin tyrosine ligase (TTL), respectively. Acetylation of alpha chains at Lys-40 stabilizes microtubules and affects affinity and processivity of microtubule motors. This modification has a role in multiple cellular functions, ranging from cell motility, cell cycle progression or cell differentiation to intracellular trafficking and signaling.

Its subcellular location is the cytoplasm. It localises to the cytoskeleton. The enzyme catalyses GTP + H2O = GDP + phosphate + H(+). Functionally, tubulin is the major constituent of microtubules, a cylinder consisting of laterally associated linear protofilaments composed of alpha- and beta-tubulin heterodimers. Microtubules grow by the addition of GTP-tubulin dimers to the microtubule end, where a stabilizing cap forms. Below the cap, tubulin dimers are in GDP-bound state, owing to GTPase activity of alpha-tubulin. The polypeptide is Tubulin alpha-1 chain (Gossypium hirsutum (Upland cotton)).